The following is a 365-amino-acid chain: uncharacterized protein (365 aa).

The Cytoplasmic portion of the chain corresponds to 1–133; it reads MVLAKQWVLK…RKLDKNKVGK (133 aa). A helical transmembrane segment spans residues 134–154; it reads LWWYLSVLGGTSLTAYFIFFT. Over 155–169 the chain is Extracellular; it reads YAQLQEREEDYGKVY. The helical transmembrane segment at 170–190 threads the bilayer; that stretch reads LISGAAGAVGTVCIQLALNVF. Residues 191 to 365 lie on the Cytoplasmic side of the membrane; it reads KASKVIAIAG…KLITKVNNEE (175 aa).

The protein resides in the membrane. This is an uncharacterized protein from Saccharomyces cerevisiae (strain ATCC 204508 / S288c) (Baker's yeast).